A 258-amino-acid polypeptide reads, in one-letter code: Spectinomycin 9-adenylyltransferase (258 aa).

It carries out the reaction spectinomycin + ATP = 9-O-adenylylspectinomycin + diphosphate. Functionally, mediates bacterial resistance to spectinomycin, is probably a spectinomycin 9-adenylyltransferase. This is Spectinomycin 9-adenylyltransferase from Campylobacter jejuni.